A 347-amino-acid chain; its full sequence is MNPVVLTMILLTIMLGTVIVMTTSHWLLVWIGFEMNMLAIIPILMKKYNPRSMEASTKYFLTQATASMLLMLAIVINLIHSGQWSTTNPLDPTTSIIMTLALAMKLGLAPFHFWVPEVTQGIQLSSGLILLTWQKLAPMSILYQISPTINLHLLLLMSLTSILIGGWGGLNQTQLRKIMAYSSIAHMGWMTTIMIYNPTMALLNLTIYIILTTTTFMTFMMSSSTTTLSLSHLWNKMPLLTSAVLMTMLSLGGLPPLSGFSPKWMIIQELTKNNSIIMPTIMAITALLNLFFYMRLAYSTSLTMFPSTNNMKIKWQFNNSKSMNLLSPMIILSTLILPLSPMLALLE.

11 helical membrane passes run 3–23 (PVVLTMILLTIMLGTVIVMTT), 25–45 (HWLLVWIGFEMNMLAIIPILM), 59–79 (YFLTQATASMLLMLAIVINLI), 96–116 (IIMTLALAMKLGLAPFHFWVP), 122–142 (IQLSSGLILLTWQKLAPMSIL), 149–169 (INLHLLLLMSLTSILIGGWGG), 178–198 (IMAYSSIAHMGWMTTIMIYNP), 200–220 (MALLNLTIYIILTTTTFMTFM), 237–257 (MPLLTSAVLMTMLSLGGLPPL), 274–294 (NSIIMPTIMAITALLNLFFYM), and 325–345 (LLSPMIILSTLILPLSPMLAL).

The protein belongs to the complex I subunit 2 family. Core subunit of respiratory chain NADH dehydrogenase (Complex I) which is composed of 45 different subunits. Interacts with TMEM242.

Its subcellular location is the mitochondrion inner membrane. The enzyme catalyses a ubiquinone + NADH + 5 H(+)(in) = a ubiquinol + NAD(+) + 4 H(+)(out). In terms of biological role, core subunit of the mitochondrial membrane respiratory chain NADH dehydrogenase (Complex I) which catalyzes electron transfer from NADH through the respiratory chain, using ubiquinone as an electron acceptor. Essential for the catalytic activity and assembly of complex I. This Paranyctimene raptor (Unstriped tube-nosed fruit bat) protein is NADH-ubiquinone oxidoreductase chain 2.